Consider the following 490-residue polypeptide: Tryptophan 5-hydroxylase 2 (490 aa).

The residue at position 19 (Ser-19) is a Phosphoserine. The segment covering 31-42 (LGSSTLNKPNSG) has biased composition (polar residues). The segment at 31 to 58 (LGSSTLNKPNSGKNDDKGNKGSSKREAA) is disordered. Basic and acidic residues predominate over residues 43 to 58 (KNDDKGNKGSSKREAA). The region spanning 65–140 (AVVFSLKNEV…TIVTLNPPEN (76 aa)) is the ACT domain. Fe cation contacts are provided by His-318, His-323, and Glu-363.

The protein belongs to the biopterin-dependent aromatic amino acid hydroxylase family. Interacts with DNAJC12. Requires Fe(2+) as cofactor. As to expression, brain specific.

The catalysed reaction is (6R)-L-erythro-5,6,7,8-tetrahydrobiopterin + L-tryptophan + O2 = 5-hydroxy-L-tryptophan + (4aS,6R)-4a-hydroxy-L-erythro-5,6,7,8-tetrahydrobiopterin. The protein operates within aromatic compound metabolism; serotonin biosynthesis; serotonin from L-tryptophan: step 1/2. This is Tryptophan 5-hydroxylase 2 (TPH2) from Homo sapiens (Human).